Here is a 293-residue protein sequence, read N- to C-terminus: Lysosomal amino acid transporter 1 homolog (293 aa).

The Lumenal segment spans residues 1 to 37 (MVWRTLVASNFSTCPNGSIQWIWDVFGECAQDGWDEA). An N-linked (GlcNAc...) asparagine glycan is attached at Asn-10. The 67-residue stretch at 34–100 (WDEASVALGL…LADQLPLQTY (67 aa)) folds into the PQ-loop 1 domain. The helical transmembrane segment at 38-58 (SVALGLVSIFCFAASTFPQYI) threads the bilayer. Topologically, residues 59 to 71 (KACKTGNMDQALS) are cytoplasmic. The chain crosses the membrane as a helical span at residues 72–92 (LWFLLGWIGGDSCNLIGSFLA). Topologically, residues 93 to 96 (DQLP) are lumenal. The chain crosses the membrane as a helical span at residues 97 to 117 (LQTYTAVYYVLADLLMLTLYF). Residues 118–126 (HYKFKKQPS) lie on the Cytoplasmic side of the membrane. The chain crosses the membrane as a helical span at residues 127 to 147 (LLSAPINSVLLFILGTVCITP). The Lumenal portion of the chain corresponds to 148 to 182 (LLSSTDPVAVPREGFRGRTLLSVEPGNKPFTKKEV). A helical membrane pass occupies residues 183 to 203 (VGFVIGSASSVLYLLSRLPQI). The region spanning 191 to 243 (SSVLYLLSRLPQIRTNFVRQSTQGISYSLFALVMLGNTLYGLSVLLKNPEVGQ) is the PQ-loop 2 domain. Residues 204–214 (RTNFVRQSTQG) are Cytoplasmic-facing. A helical transmembrane segment spans residues 215–235 (ISYSLFALVMLGNTLYGLSVL). At 236-254 (LKNPEVGQSEGSYLLHHLP) the chain is on the lumenal side. The helical transmembrane segment at 255–275 (WLVGSLGVLLLDTIISIQFLV) threads the bilayer. Over 276-293 (YRSHDADAASEREPLLPS) the chain is Cytoplasmic. Positions 290–291 (LL) match the Di-leucine motif motif.

This sequence belongs to the laat-1 family.

It is found in the lysosome membrane. Amino acid transporter that specifically mediates the pH-dependent export of the cationic amino acids arginine, histidine and lysine from lysosomes. The chain is Lysosomal amino acid transporter 1 homolog (Slc66a1) from Rattus norvegicus (Rat).